Consider the following 129-residue polypeptide: DNA-directed RNA polymerase III subunit rpc9 (129 aa).

Belongs to the eukaryotic RPC9 RNA polymerase subunit family. Component of the RNA polymerase III (Pol III) complex.

The protein resides in the cytoplasm. It is found in the nucleus. DNA-dependent RNA polymerase catalyzes the transcription of DNA into RNA using the four ribonucleoside triphosphates as substrates. Specific peripheric component of RNA polymerase III which synthesizes small RNAs, such as 5S rRNA and tRNAs. This chain is DNA-directed RNA polymerase III subunit rpc9 (rpc17), found in Schizosaccharomyces pombe (strain 972 / ATCC 24843) (Fission yeast).